Consider the following 157-residue polypeptide: uncharacterized protein (157 aa).

The chain crosses the membrane as a helical span at residues 6 to 26; that stretch reads LVGGVLRVLVVVGAVFDVAVL. Residues 33-157 form the Ricin B-type lectin domain; it reads ADGPVQLKSR…APDQQWDSVP (125 aa).

The protein localises to the membrane. This is an uncharacterized protein from Mycobacterium tuberculosis (strain CDC 1551 / Oshkosh).